The primary structure comprises 278 residues: Pantothenate synthetase (278 aa).

ATP is bound at residue methionine 28–histidine 35. Histidine 35 serves as the catalytic Proton donor. Glutamine 59 is a (R)-pantoate binding site. Glutamine 59 is a binding site for beta-alanine. Glycine 145–aspartate 148 provides a ligand contact to ATP. Glutamine 151 contributes to the (R)-pantoate binding site. Leucine 182–arginine 185 lines the ATP pocket.

Belongs to the pantothenate synthetase family. As to quaternary structure, homodimer.

Its subcellular location is the cytoplasm. It catalyses the reaction (R)-pantoate + beta-alanine + ATP = (R)-pantothenate + AMP + diphosphate + H(+). The protein operates within cofactor biosynthesis; (R)-pantothenate biosynthesis; (R)-pantothenate from (R)-pantoate and beta-alanine: step 1/1. Catalyzes the condensation of pantoate with beta-alanine in an ATP-dependent reaction via a pantoyl-adenylate intermediate. This chain is Pantothenate synthetase, found in Methylobacillus flagellatus (strain ATCC 51484 / DSM 6875 / VKM B-1610 / KT).